Consider the following 255-residue polypeptide: Ditrans,polycis-undecaprenyl-diphosphate synthase ((2E,6E)-farnesyl-diphosphate specific) (255 aa).

Asp21 is a catalytic residue. A Mg(2+)-binding site is contributed by Asp21. Residues 22–25 (GNGR), Trp26, Arg34, His38, and 66–68 (SSE) each bind substrate. Asn69 (proton acceptor) is an active-site residue. Substrate is bound by residues Trp70, Arg72, Arg189, and 195-197 (RIS). Glu208 is a Mg(2+) binding site.

It belongs to the UPP synthase family. In terms of assembly, homodimer. Mg(2+) serves as cofactor.

The catalysed reaction is 8 isopentenyl diphosphate + (2E,6E)-farnesyl diphosphate = di-trans,octa-cis-undecaprenyl diphosphate + 8 diphosphate. In terms of biological role, catalyzes the sequential condensation of isopentenyl diphosphate (IPP) with (2E,6E)-farnesyl diphosphate (E,E-FPP) to yield (2Z,6Z,10Z,14Z,18Z,22Z,26Z,30Z,34E,38E)-undecaprenyl diphosphate (di-trans,octa-cis-UPP). UPP is the precursor of glycosyl carrier lipid in the biosynthesis of bacterial cell wall polysaccharide components such as peptidoglycan and lipopolysaccharide. The protein is Ditrans,polycis-undecaprenyl-diphosphate synthase ((2E,6E)-farnesyl-diphosphate specific) of Xylella fastidiosa (strain Temecula1 / ATCC 700964).